Reading from the N-terminus, the 257-residue chain is Flavodoxin/ferredoxin--NADP reductase (257 aa).

The 109-residue stretch at 2-110 (NPWINANVLK…EKSFGFFTLD (109 aa)) folds into the FAD-binding FR-type domain. Residues 59–62 (RAYS), Y75, 83–85 (KLS), and T125 contribute to the FAD site. Residues 152 to 153 (VR), 182 to 183 (SR), R193, 223 to 225 (NPA), and D229 each bind NADP(+). 256 to 257 (YW) contributes to the FAD binding site.

Belongs to the ferredoxin--NADP reductase type 1 family. FAD serves as cofactor.

Its subcellular location is the cytoplasm. The enzyme catalyses 2 reduced [2Fe-2S]-[ferredoxin] + NADP(+) + H(+) = 2 oxidized [2Fe-2S]-[ferredoxin] + NADPH. It carries out the reaction reduced [flavodoxin] + NADP(+) = oxidized [flavodoxin] + NADPH + 2 H(+). In terms of biological role, transports electrons between flavodoxin or ferredoxin and NADPH. The chain is Flavodoxin/ferredoxin--NADP reductase (fpr) from Buchnera aphidicola subsp. Schizaphis graminum (strain Sg).